A 304-amino-acid polypeptide reads, in one-letter code: UDP-N-acetylenolpyruvoylglucosamine reductase (304 aa).

One can recognise an FAD-binding PCMH-type domain in the interval 33–212; it reads MGGLADLFLI…KEMMDDLTHK (180 aa). The active site involves Arg-176. Ser-226 serves as the catalytic Proton donor. Residue Glu-296 is part of the active site.

The protein belongs to the MurB family. The cofactor is FAD.

The protein resides in the cytoplasm. The catalysed reaction is UDP-N-acetyl-alpha-D-muramate + NADP(+) = UDP-N-acetyl-3-O-(1-carboxyvinyl)-alpha-D-glucosamine + NADPH + H(+). The protein operates within cell wall biogenesis; peptidoglycan biosynthesis. Cell wall formation. This Exiguobacterium sibiricum (strain DSM 17290 / CCUG 55495 / CIP 109462 / JCM 13490 / 255-15) protein is UDP-N-acetylenolpyruvoylglucosamine reductase.